The following is a 701-amino-acid chain: Potassium-transporting ATPase ATP-binding subunit (701 aa).

The tract at residues 1–28 (MNPDAPTPKNKSSRSRPSDRPQARKKAK) is disordered. 4 helical membrane passes run 57 to 77 (MFLV…PNLF), 90 to 110 (GILT…EAVA), 245 to 265 (VLLA…PVFA), and 276 to 296 (ILVA…LSAI). The 4-aspartylphosphate intermediate role is filled by D329. ATP contacts are provided by residues D366, E370, 397–404 (FSAKTRMS), and K416. Mg(2+)-binding residues include D539 and D543. A run of 3 helical transmembrane segments spans residues 599–619 (FSLA…FASA), 635–655 (AVLS…PLAL), and 681–701 (VIAP…VGLA).

It belongs to the cation transport ATPase (P-type) (TC 3.A.3) family. Type IA subfamily. The system is composed of three essential subunits: KdpA, KdpB and KdpC.

Its subcellular location is the cell membrane. The enzyme catalyses K(+)(out) + ATP + H2O = K(+)(in) + ADP + phosphate + H(+). Functionally, part of the high-affinity ATP-driven potassium transport (or Kdp) system, which catalyzes the hydrolysis of ATP coupled with the electrogenic transport of potassium into the cytoplasm. This subunit is responsible for energy coupling to the transport system and for the release of the potassium ions to the cytoplasm. The sequence is that of Potassium-transporting ATPase ATP-binding subunit from Anabaena sp. (strain L31).